A 280-amino-acid polypeptide reads, in one-letter code: Putative S-adenosyl-L-methionine-dependent methyltransferase FRAAL3836 (280 aa).

S-adenosyl-L-methionine-binding positions include Asp-121 and 150 to 151 (DL).

This sequence belongs to the UPF0677 family.

In terms of biological role, exhibits S-adenosyl-L-methionine-dependent methyltransferase activity. The chain is Putative S-adenosyl-L-methionine-dependent methyltransferase FRAAL3836 from Frankia alni (strain DSM 45986 / CECT 9034 / ACN14a).